We begin with the raw amino-acid sequence, 344 residues long: Phenylalanine--tRNA ligase alpha subunit (344 aa).

Residue E256 coordinates Mg(2+).

Belongs to the class-II aminoacyl-tRNA synthetase family. Phe-tRNA synthetase alpha subunit type 1 subfamily. Tetramer of two alpha and two beta subunits. Requires Mg(2+) as cofactor.

The protein resides in the cytoplasm. The catalysed reaction is tRNA(Phe) + L-phenylalanine + ATP = L-phenylalanyl-tRNA(Phe) + AMP + diphosphate + H(+). This chain is Phenylalanine--tRNA ligase alpha subunit, found in Bacillus pumilus (strain SAFR-032).